A 293-amino-acid chain; its full sequence is 4-hydroxy-tetrahydrodipicolinate synthase (293 aa).

Residue threonine 47 participates in pyruvate binding. The Proton donor/acceptor role is filled by tyrosine 135. Residue lysine 163 is the Schiff-base intermediate with substrate of the active site. Residue valine 205 coordinates pyruvate.

This sequence belongs to the DapA family. Homotetramer; dimer of dimers.

The protein localises to the cytoplasm. It carries out the reaction L-aspartate 4-semialdehyde + pyruvate = (2S,4S)-4-hydroxy-2,3,4,5-tetrahydrodipicolinate + H2O + H(+). It functions in the pathway amino-acid biosynthesis; L-lysine biosynthesis via DAP pathway; (S)-tetrahydrodipicolinate from L-aspartate: step 3/4. Its function is as follows. Catalyzes the condensation of (S)-aspartate-beta-semialdehyde [(S)-ASA] and pyruvate to 4-hydroxy-tetrahydrodipicolinate (HTPA). The polypeptide is 4-hydroxy-tetrahydrodipicolinate synthase (Methylibium petroleiphilum (strain ATCC BAA-1232 / LMG 22953 / PM1)).